A 112-amino-acid polypeptide reads, in one-letter code: Thyroid transcription factor 1 (112 aa).

The segment at residues 1–60 (RRNRRVLFSQAQVYELERRFKQQKYLSAPEREHLASMIHLTPTQVKIWFQNHRYKMKRQA) is a DNA-binding region (homeobox). The disordered stretch occupies residues 59-100 (QAKDKAAQQQLQQDSGGGGGGGGAGCPQQQQAQQQSPRRVAV). Residues 73–83 (SGGGGGGGGAG) show a composition bias toward gly residues. The span at 84 to 93 (CPQQQQAQQQ) shows a compositional bias: low complexity.

This sequence belongs to the NK-2 homeobox family. In terms of processing, phosphorylated on serine residues.

Its subcellular location is the nucleus. Its function is as follows. Transcription factor that binds and activates the promoter of thyroid specific genes such as thyroglobulin, thyroperoxidase, and thyrotropin receptor. Crucial in the maintenance of the thyroid differentiation phenotype. May play a role in lung development and surfactant homeostasis. This Cavia porcellus (Guinea pig) protein is Thyroid transcription factor 1 (TITF1).